The primary structure comprises 1230 residues: ATP-dependent helicase/nuclease subunit A (1230 aa).

The UvrD-like helicase ATP-binding domain occupies 4 to 480; that stretch reads RNWTGPQEAA…IDLSHNFRSR (477 aa). 25–32 is a binding site for ATP; that stretch reads AGAGSGKT. The 283-residue stretch at 517–799 folds into the UvrD-like helicase C-terminal domain; it reads AQLEGSGPPV…RIMSIHQAKG (283 aa). The segment at 535-554 is disordered; it reads TSVGRDTAGTADDEPDRSDE. Residues 545 to 554 show a composition bias toward acidic residues; the sequence is ADDEPDRSDE.

This sequence belongs to the helicase family. AddA subfamily. As to quaternary structure, heterodimer of AddA and AddB/RexB. Requires Mg(2+) as cofactor.

The catalysed reaction is Couples ATP hydrolysis with the unwinding of duplex DNA by translocating in the 3'-5' direction.. It carries out the reaction ATP + H2O = ADP + phosphate + H(+). In terms of biological role, the heterodimer acts as both an ATP-dependent DNA helicase and an ATP-dependent, dual-direction single-stranded exonuclease. Recognizes the chi site generating a DNA molecule suitable for the initiation of homologous recombination. The AddA nuclease domain is required for chi fragment generation; this subunit has the helicase and 3' -&gt; 5' nuclease activities. The protein is ATP-dependent helicase/nuclease subunit A of Desulforudis audaxviator (strain MP104C).